Consider the following 630-residue polypeptide: MGAEGLQGEGEVPPQGAGVPGQVQVGVHQEARHGESLQWGRAGPRPPSPSRDPRGLPVEAGGGGALRGQGQEPPRPGEKLLPRRGQGEAHRRGGTGLDFIATRDEVEALLLEANLIKAHRPLYNVLLKDDKHYPFLKLTNEPFPTLLVVRRVEEDGAKYYGPFPEAGALRRIKTLIDRLFPLRKNSGYPMKRRRYPCLNYSMGRCLAPCVGKADPEAYQEVVRQVEAVLEGRVDGLLQELEAKMREAARRLEFERAAEIRDQMEALRAFFSTDQQAFDPEMGDLDFLGMARSGALAVVQLYQVRSGRILGRISRVVEKEEATDEEILWAFLRDHYLEASPLPPLVLLPFPLEDLESLAELLKRRAGRKVELRVPKKGEKARLLELAERNARLALETELKLRERRGEHPALKALQDLLGLPARPWRLEGYDISHLQGQARVFSIAVFEGGRPKRQEYRRMRLKAGNDDYAAMEEGVFRRYTGSLKDLPLPDLLLIDGGVGQVRAAARALEKAGLRLPLVGLAKGEEVLVTPEGRELRLPLTHPALQLLIHLRDEAHQNGLRYHRKRRSEELFRVLQGIPGIGEKRRRLLLERYGGLRALKEAPLEELARLPGMSLEAARALKAALAEEEPA.

Residues 1–96 (MGAEGLQGEG…GEAHRRGGTG (96 aa)) are disordered. The segment covering 9–28 (EGEVPPQGAGVPGQVQVGVH) has biased composition (low complexity). Positions 52–125 (DPRGLPVEAG…IKAHRPLYNV (74 aa)) constitute a GIY-YIG domain. Basic and acidic residues predominate over residues 75–91 (RPGEKLLPRRGQGEAHR). One can recognise a UVR domain in the interval 234–269 (DGLLQELEAKMREAARRLEFERAAEIRDQMEALRAF).

The protein belongs to the UvrC family. As to quaternary structure, interacts with UvrB in an incision complex.

The protein resides in the cytoplasm. The UvrABC repair system catalyzes the recognition and processing of DNA lesions. UvrC both incises the 5' and 3' sides of the lesion. The N-terminal half is responsible for the 3' incision and the C-terminal half is responsible for the 5' incision. The protein is UvrABC system protein C of Thermus thermophilus (strain ATCC BAA-163 / DSM 7039 / HB27).